A 29-amino-acid chain; its full sequence is MDILTLGWVSILALFTWSIAMVVWGRNGF.

The chain crosses the membrane as a helical span at residues Ile3–Val23.

This sequence belongs to the PetN family. In terms of assembly, the 4 large subunits of the cytochrome b6-f complex are cytochrome b6, subunit IV (17 kDa polypeptide, PetD), cytochrome f and the Rieske protein, while the 4 small subunits are PetG, PetL, PetM and PetN. The complex functions as a dimer.

The protein localises to the cellular thylakoid membrane. Its function is as follows. Component of the cytochrome b6-f complex, which mediates electron transfer between photosystem II (PSII) and photosystem I (PSI), cyclic electron flow around PSI, and state transitions. The sequence is that of Cytochrome b6-f complex subunit 8 from Microcystis aeruginosa (strain NIES-843 / IAM M-2473).